The primary structure comprises 252 residues: Protein IL-40 (252 aa).

Residues 1–18 form the signal peptide; it reads MALLQLLLFAMLAACGFS. N-linked (GlcNAc...) asparagine glycans are attached at residues Asn-82 and Asn-177.

In terms of tissue distribution, expressed in bone marrow, spleen and lymph node.

It is found in the secreted. Its function is as follows. Probable B cell-associated cytokine that plays a role in the regulation of humoral immune responses. Involved in lymphocyte B cell development and immunoglobulin/IgA production. The sequence is that of Protein IL-40 from Mus musculus (Mouse).